Consider the following 652-residue polypeptide: NAD(P)H-quinone oxidoreductase subunit 5, chloroplastic (652 aa).

16 helical membrane-spanning segments follow: residues 9–29 (WLIPIFPLAGSLLIGIGLISF), 40–60 (YSFLIIALLGISLILSCLILF), 91–111 (PLTAVMLVIVTTVAILVLIYT), 124–144 (FFAYLSLFTTSMLGLVLSPNL), 147–167 (IYVFWELVGMCSYLLIGFWFT), 188–208 (GLLLGILGFYWMTGSFEFDVI), 225–245 (LAIFFGFLIFLGPVAKSAQFP), 258–278 (TPISALIHAATMVAAGVFLVA), 289–309 (FLMDLIAWTGAITAIIGATIA), 327–347 (LGYMIMAMGMGSYTASLFHLM), 354–374 (ALLFLSAGSTIHGMEPIVGFN), 395–415 (GNAFLIGTLSLCGIPPLACFW), 424–444 (AFVHSPLLWFIGWSTAGLTSF), 482–502 (TLPLIILTLFSITIGWIGTPF), 526–546 (LFIAGSSVGIALLGCYTAYLI), and 630–650 (ILMIIFTLLTILGISQTYYSL).

Belongs to the complex I subunit 5 family. In terms of assembly, NDH is composed of at least 16 different subunits, 5 of which are encoded in the nucleus.

It localises to the plastid. It is found in the chloroplast thylakoid membrane. The catalysed reaction is a plastoquinone + NADH + (n+1) H(+)(in) = a plastoquinol + NAD(+) + n H(+)(out). It catalyses the reaction a plastoquinone + NADPH + (n+1) H(+)(in) = a plastoquinol + NADP(+) + n H(+)(out). In terms of biological role, NDH shuttles electrons from NAD(P)H:plastoquinone, via FMN and iron-sulfur (Fe-S) centers, to quinones in the photosynthetic chain and possibly in a chloroplast respiratory chain. The immediate electron acceptor for the enzyme in this species is believed to be plastoquinone. Couples the redox reaction to proton translocation, and thus conserves the redox energy in a proton gradient. The sequence is that of NAD(P)H-quinone oxidoreductase subunit 5, chloroplastic (ndhF) from Mesostigma viride (Green alga).